Consider the following 535-residue polypeptide: Importin subunit alpha-2 (535 aa).

The region spanning methionine 1–leucine 58 is the IBB domain. Residues valine 20 to glutamine 46 are compositionally biased toward basic and acidic residues. Residues valine 20–proline 67 are disordered. ARM repeat units lie at residues proline 67–serine 106, serine 110–serine 150, serine 153–glycine 192, proline 195–arginine 235, lysine 237–aspartate 276, asparagine 279–threonine 318, aspartate 321–alanine 361, arginine 364–serine 403, proline 407–lysine 446, and asparagine 461–leucine 500.

Belongs to the importin alpha family. As to quaternary structure, forms a complex with the importin subunit beta-1 KPNB1. Interacts with A.tumefaciens VirD2 and VirE2. Binds to SWO1.

It localises to the nucleus envelope. Its function is as follows. Binds to conventional NLS motifs and mediates nuclear protein import across the nuclear envelope. Involved in the maintenance of cell wall integrity under salt stress via interaction with SWO1. Acts as a cellular receptor for the nuclear import of the virD2 protein of Agrobacterium, but is not essential for Agrobacterium-mediated root transformation. This Arabidopsis thaliana (Mouse-ear cress) protein is Importin subunit alpha-2.